The chain runs to 119 residues: uncharacterized protein (119 aa).

Residues 30–50 (LMTLPCVLFLSSFGQAVIVVL) traverse the membrane as a helical segment.

It is found in the membrane. This is an uncharacterized protein from Saccharomyces cerevisiae (strain ATCC 204508 / S288c) (Baker's yeast).